The primary structure comprises 62 residues: Conotoxin Pn-B02 (62 aa).

The N-terminal stretch at 1–19 (MRCLPVFIILLLLIASAPS) is a signal peptide. Positions 20–49 (FDALPKTEDNVPLSSFHDNLKRTRRIHLNI) are excised as a propeptide. An Alanine amide modification is found at alanine 61.

The protein belongs to the conotoxin T superfamily. Contains 2 disulfide bonds that can be either 'C1-C3, C2-C4' or 'C1-C4, C2-C3', since these disulfide connectivities have been observed for conotoxins with cysteine framework V (for examples, see AC P0DQQ7 and AC P81755). As to expression, expressed by the venom duct.

The protein localises to the secreted. This Conus pennaceus (Feathered cone) protein is Conotoxin Pn-B02.